Here is a 1044-residue protein sequence, read N- to C-terminus: Spindle assembly checkpoint serine/threonine-protein kinase bub1 (1044 aa).

Residues 36 to 204 (FQEELDIIEE…SSPFPPPRIV (169 aa)) form the BUB1 N-terminal domain. Disordered regions lie at residues 209–259 (PVSS…PLLY), 317–343 (VHHDSSSSNVSPIYKNPVAEQSDTPTR), 404–446 (ESLE…SQEE), 484–555 (KNSN…DSNS), and 685–705 (IKPKAGGPGRRRSSNRHSLDG). The span at 223-239 (QVFSDASSSRDSQNASD) shows a compositional bias: polar residues. Residues 430–442 (NSSNSGATSLTGR) are compositionally biased toward polar residues. Positions 504-518 (STLQEETATGTTSTT) are enriched in low complexity. Over residues 544-555 (RSPQYSTVDSNS) the composition is skewed to polar residues. The residue at position 550 (Thr550) is a Phosphothreonine. The region spanning 718 to 1044 (LSVISKLGQG…LLKSIEKRKI (327 aa)) is the Protein kinase domain. Ala728, Phe729, Ala730, Lys762, and Asp809 together coordinate ATP. Asp861 (proton acceptor) is an active-site residue. ATP contacts are provided by Asp865, Asn866, and Asp900.

The protein belongs to the protein kinase superfamily. Ser/Thr protein kinase family. BUB1 subfamily. As to quaternary structure, part of the BUB1-BUB3 complex, composed of bub1 and bub3. Interacts with spc7 (when phosphorylated on MELT motifs); to recruit the bub1-bub3 complex to kinetochores. Interacts with mad3. Autophosphorylated.

The protein localises to the nucleus. The protein resides in the chromosome. It is found in the centromere. It localises to the kinetochore. The enzyme catalyses L-seryl-[protein] + ATP = O-phospho-L-seryl-[protein] + ADP + H(+). It carries out the reaction L-threonyl-[protein] + ATP = O-phospho-L-threonyl-[protein] + ADP + H(+). In terms of biological role, involved in mitotic spindle assembly checkpoint signaling, a process that delays anaphase until chromosomes are bioriented on the spindle, and in the repair of incorrect mitotic kinetochore-spindle microtubule attachments. Acts as a kinetochore scaffold for the recruitment of other spindle assembly checkpoint components. The chain is Spindle assembly checkpoint serine/threonine-protein kinase bub1 from Schizosaccharomyces pombe (strain 972 / ATCC 24843) (Fission yeast).